The chain runs to 283 residues: Bifunctional protein FolD (283 aa).

NADP(+) contacts are provided by residues 165–167 (GAS) and Ser-190.

It belongs to the tetrahydrofolate dehydrogenase/cyclohydrolase family. Homodimer.

The enzyme catalyses (6R)-5,10-methylene-5,6,7,8-tetrahydrofolate + NADP(+) = (6R)-5,10-methenyltetrahydrofolate + NADPH. It carries out the reaction (6R)-5,10-methenyltetrahydrofolate + H2O = (6R)-10-formyltetrahydrofolate + H(+). The protein operates within one-carbon metabolism; tetrahydrofolate interconversion. Catalyzes the oxidation of 5,10-methylenetetrahydrofolate to 5,10-methenyltetrahydrofolate and then the hydrolysis of 5,10-methenyltetrahydrofolate to 10-formyltetrahydrofolate. In Cupriavidus necator (strain ATCC 17699 / DSM 428 / KCTC 22496 / NCIMB 10442 / H16 / Stanier 337) (Ralstonia eutropha), this protein is Bifunctional protein FolD.